A 101-amino-acid chain; its full sequence is Small ribosomal subunit protein uS14A (101 aa).

Residues 47-66 (ALASLPRDSNPNRVTNRCAL) are disordered.

The protein belongs to the universal ribosomal protein uS14 family. As to quaternary structure, part of the 30S ribosomal subunit. Contacts proteins S3 and S10.

Its function is as follows. Binds 16S rRNA, required for the assembly of 30S particles and may also be responsible for determining the conformation of the 16S rRNA at the A site. The polypeptide is Small ribosomal subunit protein uS14A (Myxococcus xanthus (strain DK1622)).